The primary structure comprises 160 residues: MSILKKPDLSDAQLRAKLAKGMGHNMYGEPAWPNDLLYTFPVVILGTITCCIGLALMEPSAIGEAANPFATPLEILPEWYFYPTFNLLRVIPNKLLGVLSMASVPLGLIFVPFIENRNRYQNPWRRPIATTVFLVGTVVTIWLGIGATKSIQDAISLGLF.

3 consecutive transmembrane segments (helical) span residues 36–56 (LLYT…GLAL), 95–115 (LLGV…PFIE), and 127–147 (PIAT…GIGA).

It belongs to the cytochrome b family. PetD subfamily. The 4 large subunits of the cytochrome b6-f complex are cytochrome b6, subunit IV (17 kDa polypeptide, petD), cytochrome f and the Rieske protein, while the 4 small subunits are petG, petL, petM and petN. The complex functions as a dimer.

The protein localises to the plastid. Its subcellular location is the chloroplast thylakoid membrane. In terms of biological role, component of the cytochrome b6-f complex, which mediates electron transfer between photosystem II (PSII) and photosystem I (PSI), cyclic electron flow around PSI, and state transitions. In Cyanidioschyzon merolae (strain NIES-3377 / 10D) (Unicellular red alga), this protein is Cytochrome b6-f complex subunit 4.